We begin with the raw amino-acid sequence, 113 residues long: Iron-sulfur cluster insertion protein ErpA (113 aa).

Residues Cys41, Cys105, and Cys107 each contribute to the iron-sulfur cluster site.

It belongs to the HesB/IscA family. As to quaternary structure, homodimer. Requires iron-sulfur cluster as cofactor.

Required for insertion of 4Fe-4S clusters for at least IspG. In Aliivibrio fischeri (strain ATCC 700601 / ES114) (Vibrio fischeri), this protein is Iron-sulfur cluster insertion protein ErpA.